Here is a 127-residue protein sequence, read N- to C-terminus: RxLR effector protein CRE6 (127 aa).

An N-terminal signal peptide occupies residues 1-19 (MIRNALLVLVFVLIGTISA). A RxLR-dEER motif is present at residues 48-67 (RLLRQGSVKEGGVHDATEER).

Belongs to the RxLR effector family.

Its subcellular location is the secreted. It localises to the host cell. Functionally, effector that is involved in host plant infection. Contributes to virulence during the early infection stage, by inhibiting plant defense responses induced by both PAMP-triggered immunity (PTI) and effector-triggered immunity (ETI). This chain is RxLR effector protein CRE6, found in Phytophthora infestans (strain T30-4) (Potato late blight agent).